The primary structure comprises 239 residues: MQRGALSPVLMLSAAPEPPPRPPPALSPPGPGSAPRHGSARSGPAPEPSGGLAAALDSSLRAAVAFKAEGQRCYREKKFREAIGKYHRALLQLKAAQGARPGGLPTPSPGPTTSPGPARLSEEQRRLVENTEVECYDSLTACLLQSELVNYERVREYCLKVLEKQQGNFKATYRAGIAFYHLGDYARALRYLQEARSREPTDTNVLRYIQLTQLKMNRCSLQREDSDGGTGGPARNVVG.

Residues 1-54 form a disordered region; sequence MQRGALSPVLMLSAAPEPPPRPPPALSPPGPGSAPRHGSARSGPAPEPSGGLAA. Residues serine 7 and serine 27 each carry the phosphoserine modification. Positions 16–32 are enriched in pro residues; the sequence is PEPPPRPPPALSPPGPG. A TPR 1 repeat occupies 63-97; it reads AVAFKAEGQRCYREKKFREAIGKYHRALLQLKAAQ. A disordered region spans residues 98–121; the sequence is GARPGGLPTPSPGPTTSPGPARLS. A compositionally biased stretch (pro residues) spans 104–114; that stretch reads LPTPSPGPTTS. Residues 169–202 form a TPR 2 repeat; the sequence is FKATYRAGIAFYHLGDYARALRYLQEARSREPTD.

This sequence belongs to the TTC9 family.

The sequence is that of Tetratricopeptide repeat protein 9B (Ttc9b) from Mus musculus (Mouse).